The chain runs to 638 residues: 3D-(3,5/4)-trihydroxycyclohexane-1,2-dione hydrolase (638 aa).

Glu67 contacts thiamine diphosphate. The segment at 442–523 (SLPGDLQRLW…INIMLFDNSG (82 aa)) is thiamine pyrophosphate binding. Asp494 and Asn521 together coordinate Mg(2+).

Belongs to the TPP enzyme family. The cofactor is Mg(2+). Requires thiamine diphosphate as cofactor.

The catalysed reaction is 3D-3,5/4-trihydroxycyclohexane-1,2-dione + H2O = 5-deoxy-D-glucuronate + H(+). It functions in the pathway polyol metabolism; myo-inositol degradation into acetyl-CoA; acetyl-CoA from myo-inositol: step 3/7. Its function is as follows. Involved in the cleavage of the C1-C2 bond of 3D-(3,5/4)-trihydroxycyclohexane-1,2-dione (THcHDO) to yield 5-deoxy-glucuronate (5DG). In Listeria monocytogenes serotype 4b (strain F2365), this protein is 3D-(3,5/4)-trihydroxycyclohexane-1,2-dione hydrolase.